Consider the following 143-residue polypeptide: MAKKIDAYIKLQVKAGQANPSPPVGPALGQRGVNIMEFCKAFNAQTQGLEPGLPIPVVITVYSDRSFTFITKTPPASILLKKAAGITSGSATPNTNKVGKVTRAQLEEIAKTKMPDLTAADLDAAVRSIAGSARSMGLEVEGV.

The protein belongs to the universal ribosomal protein uL11 family. Part of the ribosomal stalk of the 50S ribosomal subunit. Interacts with L10 and the large rRNA to form the base of the stalk. L10 forms an elongated spine to which L12 dimers bind in a sequential fashion forming a multimeric L10(L12)X complex. In terms of processing, one or more lysine residues are methylated.

Its function is as follows. Forms part of the ribosomal stalk which helps the ribosome interact with GTP-bound translation factors. The sequence is that of Large ribosomal subunit protein uL11 from Thioalkalivibrio sulfidiphilus (strain HL-EbGR7).